The primary structure comprises 246 residues: Probable transcriptional regulatory protein GWCH70_2524 (246 aa).

This sequence belongs to the TACO1 family.

The protein localises to the cytoplasm. This Geobacillus sp. (strain WCH70) protein is Probable transcriptional regulatory protein GWCH70_2524.